We begin with the raw amino-acid sequence, 352 residues long: UDP-N-acetylglucosamine--N-acetylmuramyl-(pentapeptide) pyrophosphoryl-undecaprenol N-acetylglucosamine transferase 2 (352 aa).

Residues 11 to 13, Arg164, Ser194, and Gln289 each bind UDP-N-acetyl-alpha-D-glucosamine; that span reads SAG.

Belongs to the glycosyltransferase 28 family. MurG subfamily.

The protein resides in the cell membrane. It catalyses the reaction di-trans,octa-cis-undecaprenyl diphospho-N-acetyl-alpha-D-muramoyl-L-alanyl-D-glutamyl-meso-2,6-diaminopimeloyl-D-alanyl-D-alanine + UDP-N-acetyl-alpha-D-glucosamine = di-trans,octa-cis-undecaprenyl diphospho-[N-acetyl-alpha-D-glucosaminyl-(1-&gt;4)]-N-acetyl-alpha-D-muramoyl-L-alanyl-D-glutamyl-meso-2,6-diaminopimeloyl-D-alanyl-D-alanine + UDP + H(+). It participates in cell wall biogenesis; peptidoglycan biosynthesis. Functionally, cell wall formation. Catalyzes the transfer of a GlcNAc subunit on undecaprenyl-pyrophosphoryl-MurNAc-pentapeptide (lipid intermediate I) to form undecaprenyl-pyrophosphoryl-MurNAc-(pentapeptide)GlcNAc (lipid intermediate II). This is UDP-N-acetylglucosamine--N-acetylmuramyl-(pentapeptide) pyrophosphoryl-undecaprenol N-acetylglucosamine transferase 2 from Bacillus cereus (strain ATCC 10987 / NRS 248).